The primary structure comprises 34 residues: Photosystem II reaction center protein M (34 aa).

A helical transmembrane segment spans residues 7–27 (GFVASLLFILVPAIFLIVLYI).

The protein belongs to the PsbM family. In terms of assembly, PSII is composed of 1 copy each of membrane proteins PsbA, PsbB, PsbC, PsbD, PsbE, PsbF, PsbH, PsbI, PsbJ, PsbK, PsbL, PsbM, PsbT, PsbX, PsbY, PsbZ, Psb30/Ycf12, peripheral proteins PsbO, CyanoQ (PsbQ), PsbU, PsbV and a large number of cofactors. It forms dimeric complexes.

Its subcellular location is the cellular thylakoid membrane. In terms of biological role, one of the components of the core complex of photosystem II (PSII). PSII is a light-driven water:plastoquinone oxidoreductase that uses light energy to abstract electrons from H(2)O, generating O(2) and a proton gradient subsequently used for ATP formation. It consists of a core antenna complex that captures photons, and an electron transfer chain that converts photonic excitation into a charge separation. This subunit is found at the monomer-monomer interface. The polypeptide is Photosystem II reaction center protein M (Parasynechococcus marenigrum (strain WH8102)).